A 219-amino-acid chain; its full sequence is MTEQVQANETETPVAVADERIIRETGIDAKVAGIVEPVINTLGFRLVRVRLSGLNGQTLQIMAERPDGTMTVDDCELVSRTVAPVLDVEDPISGKYHLEISSPGIDRPLVRKSDFSDWAGHIAKVETSIVHEGRKKFRGRIVVGEADSVTIESDQISYGNEPVVRIPFDLISDARLVLTDDLIRDALRKDKALREGRIPGDDLGAEPEDAASTETQEKK.

Residues 195–219 form a disordered region; it reads EGRIPGDDLGAEPEDAASTETQEKK.

This sequence belongs to the RimP family.

Its subcellular location is the cytoplasm. Its function is as follows. Required for maturation of 30S ribosomal subunits. This chain is Ribosome maturation factor RimP, found in Brucella melitensis biotype 2 (strain ATCC 23457).